The chain runs to 901 residues: Viral-enhancing factor (901 aa).

The 304-residue stretch at 27–330 (HRRTEVGVVL…IFTWLYNPQR (304 aa)) folds into the Peptidase M60 domain. N-linked (GlcNAc...) asparagine; by host glycosylation is found at Asn265, Asn278, Asn339, Asn349, Asn540, Asn594, Asn595, Asn642, Asn683, and Asn698.

Functionally, involved in disruption of the peritrophic membrane and fusion of nucleocapsids with midgut cells. This Pseudalatia unipuncta granulosis virus (PuGV) protein is Viral-enhancing factor (VEF).